The sequence spans 261 residues: Cytochrome c oxidase subunit 3 (261 aa).

The Mitochondrial matrix portion of the chain corresponds to 1 to 15; that stretch reads MTHQTHAYHMVNPSP. Residues 16 to 34 form a helical membrane-spanning segment; sequence WPLTGALSALLMTSGLIMW. Residues 35–40 are Mitochondrial intermembrane-facing; that stretch reads FHFNST. Residues 41-66 form a helical membrane-spanning segment; sequence TLLMLGLTTNMLTMYQWWRDVIREST. Topologically, residues 67 to 72 are mitochondrial matrix; the sequence is FQGHHT. The helical transmembrane segment at 73–105 threads the bilayer; the sequence is PNVQKGLRYGMILFIISEVLFFTGFFWAFYHSS. At 106-128 the chain is on the mitochondrial intermembrane side; that stretch reads LAPTPELGGCWPPTGIHPLNPLE. Residues 129-152 traverse the membrane as a helical segment; that stretch reads VPLLNTSVLLASGVSITWAHHSLM. The Mitochondrial matrix portion of the chain corresponds to 153–155; sequence EGN. Residues 156–183 form a helical membrane-spanning segment; that stretch reads RNHMLQALFITIALGVYFTLLQASEYYE. Residues 184–190 are Mitochondrial intermembrane-facing; sequence APFTISD. Residues 191 to 223 traverse the membrane as a helical segment; that stretch reads GVYGSTFFVATGFHGLHVIIGSTFLIVCFFRQL. Residues 224–232 lie on the Mitochondrial matrix side of the membrane; that stretch reads KFHFTSNHH. A helical transmembrane segment spans residues 233-256; that stretch reads FGFEAAAWYWHFVDVVWLFLYVSI. Topologically, residues 257–261 are mitochondrial intermembrane; the sequence is YWWGS.

It belongs to the cytochrome c oxidase subunit 3 family. As to quaternary structure, component of the cytochrome c oxidase (complex IV, CIV), a multisubunit enzyme composed of 14 subunits. The complex is composed of a catalytic core of 3 subunits MT-CO1, MT-CO2 and MT-CO3, encoded in the mitochondrial DNA, and 11 supernumerary subunits COX4I, COX5A, COX5B, COX6A, COX6B, COX6C, COX7A, COX7B, COX7C, COX8 and NDUFA4, which are encoded in the nuclear genome. The complex exists as a monomer or a dimer and forms supercomplexes (SCs) in the inner mitochondrial membrane with NADH-ubiquinone oxidoreductase (complex I, CI) and ubiquinol-cytochrome c oxidoreductase (cytochrome b-c1 complex, complex III, CIII), resulting in different assemblies (supercomplex SCI(1)III(2)IV(1) and megacomplex MCI(2)III(2)IV(2)).

Its subcellular location is the mitochondrion inner membrane. It catalyses the reaction 4 Fe(II)-[cytochrome c] + O2 + 8 H(+)(in) = 4 Fe(III)-[cytochrome c] + 2 H2O + 4 H(+)(out). Its function is as follows. Component of the cytochrome c oxidase, the last enzyme in the mitochondrial electron transport chain which drives oxidative phosphorylation. The respiratory chain contains 3 multisubunit complexes succinate dehydrogenase (complex II, CII), ubiquinol-cytochrome c oxidoreductase (cytochrome b-c1 complex, complex III, CIII) and cytochrome c oxidase (complex IV, CIV), that cooperate to transfer electrons derived from NADH and succinate to molecular oxygen, creating an electrochemical gradient over the inner membrane that drives transmembrane transport and the ATP synthase. Cytochrome c oxidase is the component of the respiratory chain that catalyzes the reduction of oxygen to water. Electrons originating from reduced cytochrome c in the intermembrane space (IMS) are transferred via the dinuclear copper A center (CU(A)) of subunit 2 and heme A of subunit 1 to the active site in subunit 1, a binuclear center (BNC) formed by heme A3 and copper B (CU(B)). The BNC reduces molecular oxygen to 2 water molecules using 4 electrons from cytochrome c in the IMS and 4 protons from the mitochondrial matrix. This Antilope cervicapra (Blackbuck) protein is Cytochrome c oxidase subunit 3 (MT-CO3).